Here is a 122-residue protein sequence, read N- to C-terminus: Large ribosomal subunit protein uL14c (122 aa).

The protein belongs to the universal ribosomal protein uL14 family. In terms of assembly, part of the 50S ribosomal subunit.

Its subcellular location is the plastid. The protein resides in the chloroplast. Functionally, binds to 23S rRNA. The chain is Large ribosomal subunit protein uL14c from Cryptomeria japonica (Japanese cedar).